Here is an 82-residue protein sequence, read N- to C-terminus: Small ribosomal subunit protein bTHXm (82 aa).

Residues 1 to 22 (MAMRLAAAAAFVRRLVPARNPV) constitute a mitochondrion transit peptide. The segment at 34 to 56 (RGDKKTKRGKRFKGSYGNARPKR) is disordered. The segment covering 37-46 (KKTKRGKRFK) has biased composition (basic residues).

It belongs to the bacterial ribosomal protein bTHX family.

It localises to the mitochondrion. In Oryza sativa subsp. japonica (Rice), this protein is Small ribosomal subunit protein bTHXm.